We begin with the raw amino-acid sequence, 399 residues long: Argonaute-binding protein 1 (399 aa).

Component of the argonaute siRNA chaperone (ARC) complex composed of ago1, arb1 and arb2. Interacts with ago1.

Its subcellular location is the nucleus. The protein resides in the cytoplasm. Component of the argonaute siRNA chaperone (ARC) complex which is required for histone H3K9 methylation, heterochromatin assembly and siRNA generation. The ARC complex contains mostly double-stranded siRNA. Inhibits the release of the siRNA passenger strand from ago1 together with arb2. Inhibits the slicer activity of ago1. Required for swi6 localization to the centromeric repeats. This chain is Argonaute-binding protein 1 (arb1), found in Schizosaccharomyces pombe (strain 972 / ATCC 24843) (Fission yeast).